Here is a 317-residue protein sequence, read N- to C-terminus: Transaldolase 2 (317 aa).

The active-site Schiff-base intermediate with substrate is the lysine 132.

This sequence belongs to the transaldolase family. Type 1 subfamily. In terms of assembly, homodimer.

It is found in the cytoplasm. The catalysed reaction is D-sedoheptulose 7-phosphate + D-glyceraldehyde 3-phosphate = D-erythrose 4-phosphate + beta-D-fructose 6-phosphate. The protein operates within carbohydrate degradation; pentose phosphate pathway; D-glyceraldehyde 3-phosphate and beta-D-fructose 6-phosphate from D-ribose 5-phosphate and D-xylulose 5-phosphate (non-oxidative stage): step 2/3. Its function is as follows. Transaldolase is important for the balance of metabolites in the pentose-phosphate pathway. In Pectobacterium atrosepticum (strain SCRI 1043 / ATCC BAA-672) (Erwinia carotovora subsp. atroseptica), this protein is Transaldolase 2.